The chain runs to 181 residues: UPF0398 protein LMOf2365_1918 (181 aa).

It belongs to the UPF0398 family.

This is UPF0398 protein LMOf2365_1918 from Listeria monocytogenes serotype 4b (strain F2365).